A 404-amino-acid chain; its full sequence is MIVRHLSLGDFRNYTRADVALLPGATLFVGSNGQGKTNLVEALGFLSTLGSHRVSTDQALIRQGAESAVIRALLQHAGRELRVEVQINRSAANRAQVNSTPTKPRELPRYFSSVLFAPEDLALVRGDPSGRRRLLDQLLVLRTPRLAGVLSDYDRALKQRNTLLKSARARGMKADQLGTLDIWDERLVAIGSQIIAARGALVEALQPELARAYLAVAGSDHGPSARPELSILADDPGEDDIADETGARDGGRFTRSDDVVPVFTAAIARMRPRELERGLTLVGPHRDDVLFRLNGLPAKGYASHGESWSFALALKLASAELLRRDSQTGDPVLILDDVFAELDQARRGRLAEAVTGFEQVLITAAVFEDVPAHLAANAVHIRAGEIVDAPAPASEPDAEGGGAA.

30 to 37 (GSNGQGKT) is a binding site for ATP.

Belongs to the RecF family.

The protein resides in the cytoplasm. In terms of biological role, the RecF protein is involved in DNA metabolism; it is required for DNA replication and normal SOS inducibility. RecF binds preferentially to single-stranded, linear DNA. It also seems to bind ATP. This Clavibacter michiganensis subsp. michiganensis (strain NCPPB 382) protein is DNA replication and repair protein RecF.